Reading from the N-terminus, the 275-residue chain is 4,5-DOPA dioxygenase extradiol 1 (275 aa).

The Zn(2+) site is built by histidine 22, histidine 60, histidine 182, and histidine 236.

It belongs to the DODA-type extradiol aromatic ring-opening dioxygenase family. It depends on Zn(2+) as a cofactor.

The enzyme catalyses L-dopa + O2 = 4-(L-alanin-3-yl)-2-hydroxy-cis,cis-muconate 6-semialdehyde + H(+). It functions in the pathway pigment biosynthesis; betalain biosynthesis. Its function is as follows. Opens the cyclic ring of dihydroxy-phenylalanine (DOPA) between carbons 4 and 5, thus producing an unstable seco-DOPA that rearranges nonenzymatically to betalamic acid. The sequence is that of 4,5-DOPA dioxygenase extradiol 1 from Beta vulgaris (Sugar beet).